The primary structure comprises 419 residues: Copalyl diphosphate synthase 2, chloroplastic (419 aa).

Lys82 serves as a coordination point for substrate.

This sequence belongs to the terpene synthase family. Tpsc subfamily. Requires Mg(2+) as cofactor. In terms of tissue distribution, ubiquitous expression in roots, stems, leaves and flowers.

It is found in the plastid. The protein resides in the chloroplast. It carries out the reaction (2E,6E,10E)-geranylgeranyl diphosphate = (+)-copalyl diphosphate. It participates in secondary metabolite biosynthesis; terpenoid biosynthesis. Functionally, involved in the biosynthesis of ent-kaurene diterpenoids natural products such as oridonin, miltiradiene, eriocalyxin B and nezukol, known to exhibit antitumor, anti-inflammatory and antibacterial activities. Catalyzes the conversion of (2E,6E,10E)-geranylgeranyl diphosphate (GGPP) to (+)-copalyl diphosphate ((+)-CPP). This Isodon rubescens (Rabdosia rubescens) protein is Copalyl diphosphate synthase 2, chloroplastic.